The chain runs to 86 residues: Latartoxin-1b (86 aa).

The first 19 residues, 1–19 (MKILVLAVVCTVLLQVALS), serve as a signal peptide directing secretion. Positions 20 to 26 (ADSEEVR) are cleaved as a propeptide — removed in mature form. Residues 23 to 26 (EEVR) carry the Processing quadruplet motif motif. 4 cysteine pairs are disulfide-bonded: Cys-28-Cys-43, Cys-35-Cys-48, Cys-42-Cys-65, and Cys-50-Cys-63.

Belongs to the neurotoxin 19 (CSTX) family. Post-translationally, contains 4 disulfide bonds. In terms of processing, cleavage of the propeptide depends on the processing quadruplet motif (XXXR, with at least one of X being E). In terms of tissue distribution, expressed by the venom gland.

Its subcellular location is the secreted. Its function is as follows. Insect toxin. In Lachesana tarabaevi (Spider), this protein is Latartoxin-1b.